The chain runs to 447 residues: Tubulin beta-2 chain (447 aa).

GTP-binding residues include Gln-11, Glu-69, Ser-138, Gly-142, Thr-143, Gly-144, Asn-204, and Asn-226. Mg(2+) is bound at residue Glu-69. The disordered stretch occupies residues 419–447 (VSEYQQYQDATADDEGEYEDEEEEADLQD). The segment covering 429–447 (TADDEGEYEDEEEEADLQD) has biased composition (acidic residues).

The protein belongs to the tubulin family. As to quaternary structure, dimer of alpha and beta chains. A typical microtubule is a hollow water-filled tube with an outer diameter of 25 nm and an inner diameter of 15 nM. Alpha-beta heterodimers associate head-to-tail to form protofilaments running lengthwise along the microtubule wall with the beta-tubulin subunit facing the microtubule plus end conferring a structural polarity. Microtubules usually have 13 protofilaments but different protofilament numbers can be found in some organisms and specialized cells. Requires Mg(2+) as cofactor. Expressed in leaf sheaths and suspension cultured cells.

It is found in the cytoplasm. The protein resides in the cytoskeleton. Functionally, tubulin is the major constituent of microtubules, a cylinder consisting of laterally associated linear protofilaments composed of alpha- and beta-tubulin heterodimers. Microtubules grow by the addition of GTP-tubulin dimers to the microtubule end, where a stabilizing cap forms. Below the cap, tubulin dimers are in GDP-bound state, owing to GTPase activity of alpha-tubulin. The polypeptide is Tubulin beta-2 chain (TUBB2) (Oryza sativa subsp. japonica (Rice)).